The following is a 426-amino-acid chain: D-tagatose-1,6-bisphosphate aldolase subunit KbaZ (426 aa).

It belongs to the GatZ/KbaZ family. KbaZ subfamily. Forms a complex with KbaY.

It functions in the pathway carbohydrate metabolism; D-tagatose 6-phosphate degradation; D-glyceraldehyde 3-phosphate and glycerone phosphate from D-tagatose 6-phosphate: step 2/2. Functionally, component of the tagatose-1,6-bisphosphate aldolase KbaYZ that is required for full activity and stability of the Y subunit. Could have a chaperone-like function for the proper and stable folding of KbaY. When expressed alone, KbaZ does not show any aldolase activity. This Escherichia coli (strain ATCC 8739 / DSM 1576 / NBRC 3972 / NCIMB 8545 / WDCM 00012 / Crooks) protein is D-tagatose-1,6-bisphosphate aldolase subunit KbaZ.